The chain runs to 319 residues: Thioredoxin reductase (319 aa).

Residues 11–14 (SGPA), 40–41 (IA), glutamine 45, asparagine 54, cysteine 145, aspartate 288, and 295–297 (RQA) contribute to the FAD site. A disulfide bond links cysteine 142 and cysteine 145.

The protein belongs to the class-II pyridine nucleotide-disulfide oxidoreductase family. Homodimer. Requires FAD as cofactor.

It localises to the cytoplasm. It catalyses the reaction [thioredoxin]-dithiol + NADP(+) = [thioredoxin]-disulfide + NADPH + H(+). The sequence is that of Thioredoxin reductase (TRR1) from Candida glabrata (strain ATCC 2001 / BCRC 20586 / JCM 3761 / NBRC 0622 / NRRL Y-65 / CBS 138) (Yeast).